A 298-amino-acid chain; its full sequence is Junctional adhesion molecule B (298 aa).

Residues methionine 1 to glycine 28 form the signal peptide. The Extracellular portion of the chain corresponds to phenylalanine 29–serine 238. The Ig-like V-type domain occupies proline 32–threonine 127. Intrachain disulfides connect cysteine 50–cysteine 109 and cysteine 155–cysteine 214. 3 N-linked (GlcNAc...) asparagine glycosylation sites follow: asparagine 98, asparagine 187, and asparagine 236. In terms of domain architecture, Ig-like C2-type spans proline 134–serine 238. The helical transmembrane segment at glycine 239–cysteine 259 threads the bilayer. At tyrosine 260 to isoleucine 298 the chain is on the cytoplasmic side.

This sequence belongs to the immunoglobulin superfamily. Highly expressed in heart, placenta, lung, foreskin and lymph node. Prominently expressed on high endothelial venules and also present on the endothelia of other vessels (at protein level). Also expressed in the brain in the caudate nuclei.

Its subcellular location is the cell membrane. The protein localises to the cell junction. It is found in the tight junction. Junctional adhesion protein that mediates heterotypic cell-cell interactions with its cognate receptor JAM3 to regulate different cellular processes. Plays a role in homing and mobilization of hematopoietic stem and progenitor cells within the bone marrow. At the surface of bone marrow stromal cells, it contributes to the retention of the hematopoietic stem and progenitor cells expressing JAM3. Plays a central role in leukocytes extravasation by facilitating not only transmigration but also tethering and rolling of leukocytes along the endothelium. Tethering and rolling of leukocytes are dependent on the binding by JAM2 of the integrin alpha-4/beta-1. Plays a role in spermatogenesis where JAM2 and JAM3, which are respectively expressed by Sertoli and germ cells, mediate an interaction between both cell types and play an essential role in the anchorage of germ cells onto Sertoli cells and the assembly of cell polarity complexes during spermatid differentiation. Also functions as an inhibitory somatodendritic cue that prevents the myelination of non-axonal parts of neurons. During myogenesis, it is involved in myocyte fusion. May also play a role in angiogenesis. The chain is Junctional adhesion molecule B from Homo sapiens (Human).